The sequence spans 526 residues: ATP synthase subunit alpha (526 aa).

174–181 (GDRKTGKT) lines the ATP pocket. Residues 505 to 520 (FEPARSEVKVETRPQE) show a composition bias toward basic and acidic residues. The segment at 505–526 (FEPARSEVKVETRPQEEEGEEG) is disordered.

It belongs to the ATPase alpha/beta chains family. As to quaternary structure, F-type ATPases have 2 components, CF(1) - the catalytic core - and CF(0) - the membrane proton channel. CF(1) has five subunits: alpha(3), beta(3), gamma(1), delta(1), epsilon(1). CF(0) has three main subunits: a(1), b(2) and c(9-12). The alpha and beta chains form an alternating ring which encloses part of the gamma chain. CF(1) is attached to CF(0) by a central stalk formed by the gamma and epsilon chains, while a peripheral stalk is formed by the delta and b chains.

The protein resides in the cell membrane. It carries out the reaction ATP + H2O + 4 H(+)(in) = ADP + phosphate + 5 H(+)(out). Functionally, produces ATP from ADP in the presence of a proton gradient across the membrane. The alpha chain is a regulatory subunit. The chain is ATP synthase subunit alpha from Rubrobacter xylanophilus (strain DSM 9941 / JCM 11954 / NBRC 16129 / PRD-1).